The chain runs to 220 residues: Putative tyrosine-protein phosphatase 1 (220 aa).

In terms of domain architecture, Tyrosine-protein phosphatase spans 67–218 (FKVPLNAELF…LLARKHVRGQ (152 aa)).

The protein belongs to the protein-tyrosine phosphatase family. Non-receptor class CDC14 subfamily.

It carries out the reaction O-phospho-L-tyrosyl-[protein] + H2O = L-tyrosyl-[protein] + phosphate. Could be inactive as the active site cysteine is modified to tryptophan. This is Putative tyrosine-protein phosphatase 1 (PTP-1) from Orgyia pseudotsugata multicapsid polyhedrosis virus (OpMNPV).